The sequence spans 320 residues: Putative olfactory receptor 2W5 pseudogene (320 aa).

Asn-5 is a glycosylation site (N-linked (GlcNAc...) asparagine). 4 helical membrane passes run 30 to 50 (VILI…LLLV), 58 to 78 (PMYF…ASIA), 98 to 118 (VAQL…LVVM), and 140 to 160 (LCLQ…FIMC). Cys-97 and Cys-179 are oxidised to a cystine. The segment at 267 to 320 (LPRSGEVPDSLLHHRHSQHQPPHLHFEEQGCEGDHEETSGVGERGWGASTRGTL) is disordered. Over residues 290 to 304 (LHFEEQGCEGDHEET) the composition is skewed to basic and acidic residues.

This sequence belongs to the G-protein coupled receptor 1 family.

It is found in the cell membrane. Odorant receptor. In Homo sapiens (Human), this protein is Putative olfactory receptor 2W5 pseudogene.